The chain runs to 1703 residues: Pecanex-like protein 1 (1703 aa).

The next 2 helical transmembrane spans lie at 31 to 53 (VNALHLYIWLFLLCFPFTLYMAL) and 57 to 74 (MVIVGIYCGVIAAMFLLL). Residues 91-100 (VEHQTRESKG) show a composition bias toward basic and acidic residues. The disordered stretch occupies residues 91-126 (VEHQTRESKGSRGGTGGANDPVTRREDSNGLGDPGG). An N-linked (GlcNAc...) asparagine glycan is attached at N256. 3 consecutive transmembrane segments (helical) span residues 416-438 (VLAVVLAVLVAFLGSVLLIHGFF), 477-499 (AYSRPVYFCLCCGLIWLLHYGSL), and 525-547 (LVIVFTLCFPIIFFVGLLPQVNT). The N-linked (GlcNAc...) asparagine glycan is linked to N564. 4 consecutive transmembrane segments (helical) span residues 569 to 591 (LLSALYSILRSIVTVALLYCFCY), 603 to 622 (IPVLFSVFCGLLVAVSYHLS), 675 to 697 (LIVCVVIAVLYFAIHVSTVFIAL), and 704 to 721 (VLYGLLGAVGLLTHYLLP). N-linked (GlcNAc...) asparagine glycans are attached at residues N988, N1129, and N1391. Disordered stretches follow at residues 1475–1556 (VQSG…HSIP) and 1577–1598 (TDPLSQHHHPHHHPQQHNPTHA). Composition is skewed to low complexity over residues 1485–1510 (ARASVVSQSSSYRYSSSRHSSLRTST) and 1518–1556 (RSSTSQLSLRTLPTSLQLRLGSTSDPAGPSSSLSSHSIP). Residues 1582–1591 (QHHHPHHHPQ) show a composition bias toward basic residues. N-linked (GlcNAc...) asparagine glycosylation is present at N1622.

Belongs to the pecanex family.

The protein localises to the membrane. The protein is Pecanex-like protein 1 of Takifugu rubripes (Japanese pufferfish).